Reading from the N-terminus, the 273-residue chain is tRNA (guanine-N(7)-)-methyltransferase (273 aa).

The interval methionine 1–valine 32 is disordered. Residues glycine 88, glutamate 111 to isoleucine 112, asparagine 150 to cysteine 151, and cysteine 170 each bind S-adenosyl-L-methionine. The active site involves aspartate 173. Threonine 248–glutamate 250 provides a ligand contact to S-adenosyl-L-methionine.

It belongs to the class I-like SAM-binding methyltransferase superfamily. TrmB family. Forms a complex with trm82.

It localises to the nucleus. The enzyme catalyses guanosine(46) in tRNA + S-adenosyl-L-methionine = N(7)-methylguanosine(46) in tRNA + S-adenosyl-L-homocysteine. Its pathway is tRNA modification; N(7)-methylguanine-tRNA biosynthesis. Catalyzes the formation of N(7)-methylguanine at position 46 (m7G46) in tRNA. The chain is tRNA (guanine-N(7)-)-methyltransferase (trm8) from Schizosaccharomyces pombe (strain 972 / ATCC 24843) (Fission yeast).